The following is a 215-amino-acid chain: Protein Ac34 (215 aa).

In terms of assembly, interacts with host proteins P40, P34 ands P20.

The protein localises to the host nucleus. Its function is as follows. Plays a role in the translocation of the P40 subunit of host Arp2/3 to the nucleus. The robust nuclear accumulation of Arp2/3 induces nuclear actin polymerization to assist in virus replication. Mechanistically, subverts the host CRM1-dependent nuclear export pathway leading to Arp2/3 acumulation in the host nucleus. This chain is Protein Ac34 (Ac34), found in Autographa californica nuclear polyhedrosis virus (AcMNPV).